A 38-amino-acid polypeptide reads, in one-letter code: Large ribosomal subunit protein bL36 (38 aa).

The protein belongs to the bacterial ribosomal protein bL36 family.

This chain is Large ribosomal subunit protein bL36, found in Lacticaseibacillus casei (strain BL23) (Lactobacillus casei).